We begin with the raw amino-acid sequence, 236 residues long: 7-cyano-7-deazaguanine synthase (236 aa).

Residue 7–17 (CSGGLDSVSLA) coordinates ATP. The Zn(2+) site is built by Cys-185, Cys-193, Cys-196, and Cys-199.

Belongs to the QueC family. Requires Zn(2+) as cofactor.

The enzyme catalyses 7-carboxy-7-deazaguanine + NH4(+) + ATP = 7-cyano-7-deazaguanine + ADP + phosphate + H2O + H(+). Its pathway is purine metabolism; 7-cyano-7-deazaguanine biosynthesis. Its function is as follows. Catalyzes the ATP-dependent conversion of 7-carboxy-7-deazaguanine (CDG) to 7-cyano-7-deazaguanine (preQ(0)). In Rhizobium meliloti (strain 1021) (Ensifer meliloti), this protein is 7-cyano-7-deazaguanine synthase.